The primary structure comprises 345 residues: Transcription initiation factor IIB (345 aa).

The segment at 20–53 adopts a TFIIB-type zinc-finger fold; sequence IVLTCPECKVYPPKIVERFSEGDVVCALCGLVLS. Zn(2+) is bound by residues Cys24, Cys27, Cys45, and Cys48. The span at 65 to 78 shows a compositional bias: basic and acidic residues; sequence TFSNDDHNGDDPSR. The disordered stretch occupies residues 65-93; sequence TFSNDDHNGDDPSRVGEASNPLLDGNNLS. 2 tandem repeats follow at residues 136-212 and 242-318.

The protein belongs to the TFIIB family. In terms of assembly, associates with TFIID-IIA (DA complex) to form TFIID-IIA-IIB (DAB-complex) which is then recognized by polymerase II.

It localises to the nucleus. General factor that plays a major role in the activation of eukaryotic genes transcribed by RNA polymerase II. The polypeptide is Transcription initiation factor IIB (SUA7) (Saccharomyces cerevisiae (strain ATCC 204508 / S288c) (Baker's yeast)).